A 317-amino-acid chain; its full sequence is Protoheme IX farnesyltransferase (317 aa).

The next 9 helical transmembrane spans lie at 28 to 48 (IIPLLLITTAASMWIASHGHI), 53 to 73 (LLITLLGGTLAAASAQTLNCI), 101 to 121 (LIFALILGSLSFSLLMVFVNL), 122 to 142 (LSACLALSGIVFYMLVYTHWL), 150 to 170 (IVIGGAAGSIPPLVGWAAVTG), 178 to 198 (ILFALIFLWTPPHFWALALMI), 223 to 243 (IWIYTLIVVPFSLLLVFPFQA), 246 to 266 (LFYAIAALVLGAIFIQKAWEL), and 282 to 302 (YSILYMMLLCTAMVVDSLPAV).

Belongs to the UbiA prenyltransferase family. Protoheme IX farnesyltransferase subfamily.

The protein localises to the cell inner membrane. It carries out the reaction heme b + (2E,6E)-farnesyl diphosphate + H2O = Fe(II)-heme o + diphosphate. Its pathway is porphyrin-containing compound metabolism; heme O biosynthesis; heme O from protoheme: step 1/1. Functionally, converts heme B (protoheme IX) to heme O by substitution of the vinyl group on carbon 2 of heme B porphyrin ring with a hydroxyethyl farnesyl side group. In Picosynechococcus sp. (strain ATCC 27264 / PCC 7002 / PR-6) (Agmenellum quadruplicatum), this protein is Protoheme IX farnesyltransferase.